A 96-amino-acid chain; its full sequence is Co-chaperonin GroES 2 (96 aa).

This sequence belongs to the GroES chaperonin family. As to quaternary structure, heptamer of 7 subunits arranged in a ring. Interacts with the chaperonin GroEL.

It is found in the cytoplasm. Functionally, together with the chaperonin GroEL, plays an essential role in assisting protein folding. The GroEL-GroES system forms a nano-cage that allows encapsulation of the non-native substrate proteins and provides a physical environment optimized to promote and accelerate protein folding. GroES binds to the apical surface of the GroEL ring, thereby capping the opening of the GroEL channel. This chain is Co-chaperonin GroES 2, found in Vibrio cholerae serotype O1 (strain ATCC 39315 / El Tor Inaba N16961).